The chain runs to 471 residues: tRNA-2-methylthio-N(6)-dimethylallyladenosine synthase (471 aa).

Residues 36-154 enclose the MTTase N-terminal domain; the sequence is KTYHIITYGC…FPQLLYKAIT (119 aa). The [4Fe-4S] cluster site is built by C45, C81, C115, C191, C195, and C198. The Radical SAM core domain maps to 177–407; that stretch reads RREGVSAFVN…VKLVEEIALK (231 aa). The 62-residue stretch at 410 to 471 folds into the TRAM domain; sequence QQMLGKVCEI…SRHWLYGEVI (62 aa).

Belongs to the methylthiotransferase family. MiaB subfamily. In terms of assembly, monomer. The cofactor is [4Fe-4S] cluster.

It localises to the cytoplasm. It carries out the reaction N(6)-dimethylallyladenosine(37) in tRNA + (sulfur carrier)-SH + AH2 + 2 S-adenosyl-L-methionine = 2-methylsulfanyl-N(6)-dimethylallyladenosine(37) in tRNA + (sulfur carrier)-H + 5'-deoxyadenosine + L-methionine + A + S-adenosyl-L-homocysteine + 2 H(+). Its function is as follows. Catalyzes the methylthiolation of N6-(dimethylallyl)adenosine (i(6)A), leading to the formation of 2-methylthio-N6-(dimethylallyl)adenosine (ms(2)i(6)A) at position 37 in tRNAs that read codons beginning with uridine. This is tRNA-2-methylthio-N(6)-dimethylallyladenosine synthase from Caldicellulosiruptor saccharolyticus (strain ATCC 43494 / DSM 8903 / Tp8T 6331).